The following is a 236-amino-acid chain: MFRRRGVTLTKALLTVVCMLAAPLTQAISVGNLTFSLPSETDFVSKRVVNNNKSARIYRIAISAIDSPGSSELRTRPVDGELLFAPRQLALQAGESEYFKFYYHGPRDNRERYYRVSFREVPTRNLTKRSPSGGEVSTEPVVVMDTILVVRPRQVQFKWSFDQVTGTVSNTGNTWFKLLIKPGCDSTEEEGDAWYLRPGDVVHQPELRQPGNHYLVYNDKFIKISDSCPAKPPSAD.

Residues 1–27 form the signal peptide; sequence MFRRRGVTLTKALLTVVCMLAAPLTQA.

The protein belongs to the EcpB/EcpE family.

Functionally, part of the ecpRABCDE operon, which encodes the E.coli common pilus (ECP). ECP is found in both commensal and pathogenic strains and plays a dual role in early-stage biofilm development and host cell recognition. The chain is Probable fimbrial chaperone EcpE (ecpE) from Escherichia coli O18:K1:H7 (strain IHE3034 / ExPEC).